A 203-amino-acid chain; its full sequence is GTP cyclohydrolase 1 (203 aa).

Residues Cys-87, His-90, and Cys-158 each contribute to the Zn(2+) site.

Belongs to the GTP cyclohydrolase I family. As to quaternary structure, homomer.

The enzyme catalyses GTP + H2O = 7,8-dihydroneopterin 3'-triphosphate + formate + H(+). The protein operates within cofactor biosynthesis; 7,8-dihydroneopterin triphosphate biosynthesis; 7,8-dihydroneopterin triphosphate from GTP: step 1/1. This Xylella fastidiosa (strain M23) protein is GTP cyclohydrolase 1.